The chain runs to 93 residues: MKPLGDRIVIEVVETEEKTASGIVLPDTAKEKPQEGRVVAVGAGRVLDNGQRIAPEVEVGDRIIFSKYAGTEVKYDGKEYLILRESDILAVIR.

Belongs to the GroES chaperonin family. In terms of assembly, heptamer of 7 subunits arranged in a ring. Interacts with the chaperonin GroEL.

The protein resides in the cytoplasm. In terms of biological role, together with the chaperonin GroEL, plays an essential role in assisting protein folding. The GroEL-GroES system forms a nano-cage that allows encapsulation of the non-native substrate proteins and provides a physical environment optimized to promote and accelerate protein folding. GroES binds to the apical surface of the GroEL ring, thereby capping the opening of the GroEL channel. This is Co-chaperonin GroES from Geobacillus kaustophilus (strain HTA426).